Here is a 174-residue protein sequence, read N- to C-terminus: Peptidyl-prolyl cis-trans isomerase-like 1 (174 aa).

The region spanning 5 to 159 (SPTYVTFDTS…EEIKIHRARL (155 aa)) is the PPIase cyclophilin-type domain.

It belongs to the cyclophilin-type PPIase family. PPIL1 subfamily.

The catalysed reaction is [protein]-peptidylproline (omega=180) = [protein]-peptidylproline (omega=0). PPIases accelerate the folding of proteins. It catalyzes the cis-trans isomerization of proline imidic peptide bonds in oligopeptides. In Cryptococcus neoformans var. neoformans serotype D (strain B-3501A) (Filobasidiella neoformans), this protein is Peptidyl-prolyl cis-trans isomerase-like 1 (CYP1).